Consider the following 208-residue polypeptide: Peptidyl-prolyl cis-trans isomerase FKBP13, chloroplastic (208 aa).

2 disulfides stabilise this stretch: Cys84/Cys96 and Cys185/Cys190. In terms of domain architecture, PPIase FKBP-type spans 109–208 (GQLIKAHYVG…LFDIEYIGKA (100 aa)).

Belongs to the FKBP-type PPIase family. Interacts in vitro with LTO1. The precursor, but not the mature form of the protein, interacts with the Rieske protein. Expressed in stems, leaves and developing flower buds, but not in roots.

Its subcellular location is the plastid. The protein resides in the chloroplast thylakoid lumen. The catalysed reaction is [protein]-peptidylproline (omega=180) = [protein]-peptidylproline (omega=0). Its activity is regulated as follows. PPIase activity is optimal in oxidized form (S-S) and minimal in reduced form (SH). Reduction of the oxidized form is mediated by thioredoxin (TRX-M). PPIases accelerate the folding of proteins. It catalyzes the cis-trans isomerization of proline imidic peptide bonds in oligopeptides. Responsive of the major PPIase activity in the chloroplast thylakoid lumen. Regulates the accumulation of Rieske protein, an essential component of the photosynthetic electron transport chain. The polypeptide is Peptidyl-prolyl cis-trans isomerase FKBP13, chloroplastic (Arabidopsis thaliana (Mouse-ear cress)).